Consider the following 551-residue polypeptide: Adenine deaminase (551 aa).

Belongs to the metallo-dependent hydrolases superfamily. Adenine deaminase family. Mn(2+) serves as cofactor.

It catalyses the reaction adenine + H2O + H(+) = hypoxanthine + NH4(+). The protein is Adenine deaminase of Methanosarcina barkeri (strain Fusaro / DSM 804).